Here is a 188-residue protein sequence, read N- to C-terminus: Ion-translocating oxidoreductase complex subunit B (188 aa).

The interval 1 to 23 is hydrophobic; the sequence is MFTAIWVMVGLAIAIGLILGWSA. Residues 29–88 form the 4Fe-4S domain; the sequence is EGNPLAEKIDAILPQTQCGQCGFPGCRPYAEAIAKGEADINQCPPGGEEGVKKLAELLGV. Residues cysteine 46, cysteine 49, cysteine 54, cysteine 71, cysteine 113, cysteine 116, cysteine 119, cysteine 123, cysteine 143, cysteine 146, cysteine 149, and cysteine 153 each coordinate [4Fe-4S] cluster. 2 4Fe-4S ferredoxin-type domains span residues 104-133 and 134-163; these read SVAFIDEQTCIGCTLCIQACPVDAISGAAK and QMHTIIADECTGCELCLAPCPVDCISMVPI.

Belongs to the 4Fe4S bacterial-type ferredoxin family. RnfB subfamily. In terms of assembly, the complex is composed of six subunits: RnfA, RnfB, RnfC, RnfD, RnfE and RnfG. The cofactor is [4Fe-4S] cluster.

It is found in the cell inner membrane. Its function is as follows. Part of a membrane-bound complex that couples electron transfer with translocation of ions across the membrane. This is Ion-translocating oxidoreductase complex subunit B from Thiobacillus denitrificans (strain ATCC 25259 / T1).